A 151-amino-acid polypeptide reads, in one-letter code: MSNEQNLTEEQISEFKEAFSLFDKDGDGSITTKELGIVMRSLGQNPTEAELQDMVNEVDADGNGTIDFPEFLAMMARKMKDVDSEEEIREAFKVFDKDGNGIISAAELRHVMTNLGEKLTDEEVDEMIREADVDGDGVIDYSEFVKMMLSK.

EF-hand domains follow at residues 10–45 (EQISEFKEAFSLFDKDGDGSITTKELGIVMRSLGQN), 46–81 (PTEAELQDMVNEVDADGNGTIDFPEFLAMMARKMKD), 83–118 (DSEEEIREAFKVFDKDGNGIISAAELRHVMTNLGEK), and 119–151 (LTDEEVDEMIREADVDGDGVIDYSEFVKMMLSK). Asp23, Asp25, Asp27, Ser29, Glu34, Asp59, Asp61, Asn63, Thr65, Glu70, Asp96, Asp98, Asn100, Glu107, Asp132, Asp134, Asp136, and Glu143 together coordinate Ca(2+).

Belongs to the calmodulin family.

Calmodulin mediates the control of a large number of enzymes, ion channels and other proteins by Ca(2+). Among the enzymes to be stimulated by the calmodulin-Ca(2+) complex are a number of protein kinases and phosphatases. The sequence is that of Calmodulin from Pneumocystis carinii.